The following is a 204-amino-acid chain: Imidazole glycerol phosphate synthase subunit HisH (204 aa).

Residues 5-204 (KVVIIDTGCA…AKLIQNFLEL (200 aa)) enclose the Glutamine amidotransferase type-1 domain. Cys-80 functions as the Nucleophile in the catalytic mechanism. Catalysis depends on residues His-186 and Glu-188.

In terms of assembly, heterodimer of HisH and HisF.

The protein resides in the cytoplasm. The enzyme catalyses 5-[(5-phospho-1-deoxy-D-ribulos-1-ylimino)methylamino]-1-(5-phospho-beta-D-ribosyl)imidazole-4-carboxamide + L-glutamine = D-erythro-1-(imidazol-4-yl)glycerol 3-phosphate + 5-amino-1-(5-phospho-beta-D-ribosyl)imidazole-4-carboxamide + L-glutamate + H(+). It catalyses the reaction L-glutamine + H2O = L-glutamate + NH4(+). It functions in the pathway amino-acid biosynthesis; L-histidine biosynthesis; L-histidine from 5-phospho-alpha-D-ribose 1-diphosphate: step 5/9. Its function is as follows. IGPS catalyzes the conversion of PRFAR and glutamine to IGP, AICAR and glutamate. The HisH subunit catalyzes the hydrolysis of glutamine to glutamate and ammonia as part of the synthesis of IGP and AICAR. The resulting ammonia molecule is channeled to the active site of HisF. The protein is Imidazole glycerol phosphate synthase subunit HisH of Vibrio parahaemolyticus serotype O3:K6 (strain RIMD 2210633).